The following is a 103-amino-acid chain: Large ribosomal subunit protein bL21 (103 aa).

Belongs to the bacterial ribosomal protein bL21 family. In terms of assembly, part of the 50S ribosomal subunit. Contacts protein L20.

Its function is as follows. This protein binds to 23S rRNA in the presence of protein L20. The sequence is that of Large ribosomal subunit protein bL21 from Burkholderia mallei (strain NCTC 10247).